The sequence spans 155 residues: Small ribosomal subunit protein uS7c (155 aa).

It belongs to the universal ribosomal protein uS7 family. Part of the 30S ribosomal subunit.

Its subcellular location is the plastid. The protein localises to the chloroplast. Functionally, one of the primary rRNA binding proteins, it binds directly to 16S rRNA where it nucleates assembly of the head domain of the 30S subunit. In Beta vulgaris (Sugar beet), this protein is Small ribosomal subunit protein uS7c.